Reading from the N-terminus, the 228-residue chain is MPRRGLVAGPDLEYFQRRYFTPAEVAQHNRPEDLWVSYLGRVYDLTSLAQEYKGNLLLKPIVEVAGQDISHWFDPKTRDIRKHIDPLTGCLRYCTPRGRFVHVPPQLPCSDWANDFGKPWWQGSYYEVGRLSAKTRSIRIINTLTSQEHTLEVGVLESIWEILHRYLPYNSHAASYTWKYEGKNLNMDFTLEENGIRDEEEEFDYLSMDGTLHTPAILLYFNDDLTEL.

The Cytochrome b5 heme-binding domain occupies 17 to 83; that stretch reads RRYFTPAEVA…DPKTRDIRKH (67 aa). 2 residues coordinate heme: Y52 and H83.

This sequence belongs to the cytochrome b5 family.

The protein localises to the cytoplasm. It localises to the cytoskeleton. It is found in the cilium axoneme. Its function is as follows. Radial spoke stalk protein that binds heme under oxidizing conditions. Required for the coordinated beating of multiple cilia maybe by functioning in a redox signaling pathway. This is Cytochrome b5 domain-containing protein 1 from Homo sapiens (Human).